The chain runs to 382 residues: S-adenosylmethionine synthase (382 aa).

Position 16 (H16) interacts with ATP. Residue D18 coordinates Mg(2+). E44 provides a ligand contact to K(+). E57 and Q100 together coordinate L-methionine. Positions 100-110 (QSPDIAQGVDN) are flexible loop. ATP-binding positions include 165-167 (DAK), 231-232 (RF), D240, 246-247 (RK), and K267. An L-methionine-binding site is contributed by D240. K271 provides a ligand contact to L-methionine.

Belongs to the AdoMet synthase family. Homotetramer; dimer of dimers. Requires Mg(2+) as cofactor. The cofactor is K(+).

The protein localises to the cytoplasm. The catalysed reaction is L-methionine + ATP + H2O = S-adenosyl-L-methionine + phosphate + diphosphate. It participates in amino-acid biosynthesis; S-adenosyl-L-methionine biosynthesis; S-adenosyl-L-methionine from L-methionine: step 1/1. Its function is as follows. Catalyzes the formation of S-adenosylmethionine (AdoMet) from methionine and ATP. The overall synthetic reaction is composed of two sequential steps, AdoMet formation and the subsequent tripolyphosphate hydrolysis which occurs prior to release of AdoMet from the enzyme. This Legionella pneumophila subsp. pneumophila (strain Philadelphia 1 / ATCC 33152 / DSM 7513) protein is S-adenosylmethionine synthase.